A 199-amino-acid polypeptide reads, in one-letter code: MACNIPNQRQRTMSTSGKALYEILGLHKGASNEEIKKTYRKLALKHHPDKNPDDPGAAEKFKEINNAHTILTDMSKRNIYDKYGSLGLYVAEQFGDENVNTYFMLSSWWAKTLFVIIGLLTGCYFCCCLCCCCNCCCGRCWTKSSMPEEDFYVSPEDLEEQIKTDIAKDMDFPVVLQPTNANEKTQLIREEPRSYCTDS.

Phosphoserine is present on residues Ser14 and Ser16. Positions 19–84 (ALYEILGLHK…SKRNIYDKYG (66 aa)) constitute a J domain.

In terms of assembly, interacts with the chaperone complex consisting of HSC70 and SGTA. Post-translationally, palmitoylated.

The protein localises to the membrane. The polypeptide is DnaJ homolog subfamily C member 5B (DNAJC5B) (Bos taurus (Bovine)).